The chain runs to 280 residues: Dermonecrotic toxin LsSicTox-alphaIA1 (280 aa).

The active site involves H12. Residues E32 and D34 each coordinate Mg(2+). H48 acts as the Nucleophile in catalysis. Disulfide bonds link C52-C58 and C54-C197. D92 contacts Mg(2+).

The protein belongs to the arthropod phospholipase D family. Class II subfamily. Mg(2+) is required as a cofactor. As to expression, expressed by the venom gland.

Its subcellular location is the secreted. The catalysed reaction is an N-(acyl)-sphingosylphosphocholine = an N-(acyl)-sphingosyl-1,3-cyclic phosphate + choline. It catalyses the reaction an N-(acyl)-sphingosylphosphoethanolamine = an N-(acyl)-sphingosyl-1,3-cyclic phosphate + ethanolamine. The enzyme catalyses a 1-acyl-sn-glycero-3-phosphocholine = a 1-acyl-sn-glycero-2,3-cyclic phosphate + choline. It carries out the reaction a 1-acyl-sn-glycero-3-phosphoethanolamine = a 1-acyl-sn-glycero-2,3-cyclic phosphate + ethanolamine. Dermonecrotic toxins cleave the phosphodiester linkage between the phosphate and headgroup of certain phospholipids (sphingolipid and lysolipid substrates), forming an alcohol (often choline) and a cyclic phosphate. This toxin acts on sphingomyelin (SM). It may also act on ceramide phosphoethanolamine (CPE), lysophosphatidylcholine (LPC) and lysophosphatidylethanolamine (LPE), but not on lysophosphatidylserine (LPS), and lysophosphatidylglycerol (LPG). It acts by transphosphatidylation, releasing exclusively cyclic phosphate products as second products. Induces dermonecrosis, hemolysis, increased vascular permeability, edema, inflammatory response, and platelet aggregation. The sequence is that of Dermonecrotic toxin LsSicTox-alphaIA1 from Loxosceles similis (Brazilian brown spider).